Here is a 268-residue protein sequence, read N- to C-terminus: 1,4-dihydroxy-2-naphthoyl-CoA synthase (268 aa).

Residues 30–31, 70–74, 114–118, Ser140, and Ser146 each bind substrate; these read VL, VGGDQ, and YAVGG. 139 to 141 is a hydrogencarbonate binding site; it reads QSG.

It belongs to the enoyl-CoA hydratase/isomerase family. MenB subfamily. It depends on hydrogencarbonate as a cofactor.

The protein localises to the plastid. The protein resides in the chloroplast. It carries out the reaction 2-succinylbenzoyl-CoA + H(+) = 1,4-dihydroxy-2-naphthoyl-CoA + H2O. It functions in the pathway quinol/quinone metabolism; 1,4-dihydroxy-2-naphthoate biosynthesis; 1,4-dihydroxy-2-naphthoate from chorismate: step 6/7. The protein operates within quinol/quinone metabolism; menaquinone biosynthesis. Converts o-succinylbenzoyl-CoA (OSB-CoA) to 1,4-dihydroxy-2-naphthoyl-CoA (DHNA-CoA). The polypeptide is 1,4-dihydroxy-2-naphthoyl-CoA synthase (menB) (Cyanidium caldarium (Red alga)).